A 263-amino-acid polypeptide reads, in one-letter code: Ribosomal RNA small subunit methyltransferase A (263 aa).

6 residues coordinate S-adenosyl-L-methionine: asparagine 20, leucine 22, glycine 47, glutamate 68, aspartate 90, and asparagine 111.

Belongs to the class I-like SAM-binding methyltransferase superfamily. rRNA adenine N(6)-methyltransferase family. RsmA subfamily.

The protein localises to the cytoplasm. The catalysed reaction is adenosine(1518)/adenosine(1519) in 16S rRNA + 4 S-adenosyl-L-methionine = N(6)-dimethyladenosine(1518)/N(6)-dimethyladenosine(1519) in 16S rRNA + 4 S-adenosyl-L-homocysteine + 4 H(+). Its function is as follows. Specifically dimethylates two adjacent adenosines (A1518 and A1519) in the loop of a conserved hairpin near the 3'-end of 16S rRNA in the 30S particle. May play a critical role in biogenesis of 30S subunits. This Chlorobium chlorochromatii (strain CaD3) protein is Ribosomal RNA small subunit methyltransferase A.